Here is a 156-residue protein sequence, read N- to C-terminus: Small ribosomal subunit protein uS7 (156 aa).

The protein belongs to the universal ribosomal protein uS7 family. Part of the 30S ribosomal subunit. Contacts proteins S9 and S11.

Functionally, one of the primary rRNA binding proteins, it binds directly to 16S rRNA where it nucleates assembly of the head domain of the 30S subunit. Is located at the subunit interface close to the decoding center, probably blocks exit of the E-site tRNA. The sequence is that of Small ribosomal subunit protein uS7 from Ruegeria pomeroyi (strain ATCC 700808 / DSM 15171 / DSS-3) (Silicibacter pomeroyi).